A 426-amino-acid polypeptide reads, in one-letter code: 4-aminobutyrate aminotransferase GabT (426 aa).

Residues 111-112 (GS) and glutamine 242 each bind pyridoxal 5'-phosphate. An N6-(pyridoxal phosphate)lysine modification is found at lysine 268. Threonine 297 provides a ligand contact to pyridoxal 5'-phosphate.

It belongs to the class-III pyridoxal-phosphate-dependent aminotransferase family. Homotetramer. Pyridoxal 5'-phosphate is required as a cofactor.

It carries out the reaction 4-aminobutanoate + 2-oxoglutarate = succinate semialdehyde + L-glutamate. The catalysed reaction is 5-aminopentanoate + 2-oxoglutarate = 5-oxopentanoate + L-glutamate. Its pathway is amino-acid degradation; 4-aminobutanoate degradation. The protein operates within amino-acid degradation. Pyridoxal phosphate-dependent enzyme that catalyzes transamination between primary amines and alpha-keto acids. Catalyzes the transfer of the amino group from gamma-aminobutyrate (GABA) to alpha-ketoglutarate (KG) to yield succinic semialdehyde (SSA) and glutamate. Thereby functions in a GABA degradation pathway that allows some E.coli strains to utilize GABA as a nitrogen source for growth. Also catalyzes the conversion of 5-aminovalerate to glutarate semialdehyde, as part of a L-lysine degradation pathway that proceeds via cadaverine, glutarate and L-2-hydroxyglutarate. In Escherichia coli (strain K12), this protein is 4-aminobutyrate aminotransferase GabT (gabT).